The following is a 406-amino-acid chain: MNLSLKVLDKRGFLKQCTNLEELSTLMDREKIVFYVGVDATSASLHIGHLIPFMVMLHLQRQGHIPIILIGGGTTKIGDPSGKDSMRKILLKEDIDENVKTISSQLLKIIDLSNGGYILNNAEWLDGINYIEFLREVGIYFSVNRMLSFETYKRRLKDGLSFIEFNYQLLQSYDFYMLSRMKNCKLQIGGDDQWGNIVSGVDLVNRKSGNKVFGLTLPLITRSDGKKMGKSEKGAVYLDSELYSVYDFYQYFRNIPDLDVKKFLYLFTFLEEEEIERIASVKGQLLNNAKEILAFEITKIVHGKDEALKASSAAKAAFKGGDGRADIPFFKLELTNLEESILLVDLMVLAKVVSSKSEARRLIDSGGVYIDKVRVGDQNYCLCKDNFINGEIELKIGKKKILRIVL.

Tyrosine 35 contacts L-tyrosine. Positions 40–49 (ATSASLHIGH) match the 'HIGH' region motif. Positions 167 and 171 each coordinate L-tyrosine. The 'KMSKS' region motif lies at 227-231 (KMGKS). Lysine 230 is a binding site for ATP. Positions 341-405 (ILLVDLMVLA…IGKKKILRIV (65 aa)) constitute an S4 RNA-binding domain.

It belongs to the class-I aminoacyl-tRNA synthetase family. TyrS type 1 subfamily. In terms of assembly, homodimer.

It is found in the cytoplasm. It carries out the reaction tRNA(Tyr) + L-tyrosine + ATP = L-tyrosyl-tRNA(Tyr) + AMP + diphosphate + H(+). In terms of biological role, catalyzes the attachment of tyrosine to tRNA(Tyr) in a two-step reaction: tyrosine is first activated by ATP to form Tyr-AMP and then transferred to the acceptor end of tRNA(Tyr). The protein is Tyrosine--tRNA ligase of Borrelia duttonii (strain Ly).